The primary structure comprises 842 residues: Glucans biosynthesis glucosyltransferase H (842 aa).

Transmembrane regions (helical) follow at residues 141-161 (LLLL…TILP), 194-214 (ILLL…TALM), 513-533 (VFLT…FLAL), 570-590 (LFAS…ILIW), 615-635 (VLLA…AFLG), and 680-700 (FLFW…VSVI).

This sequence belongs to the glycosyltransferase 2 family. OpgH subfamily.

It is found in the cell inner membrane. It participates in glycan metabolism; osmoregulated periplasmic glucan (OPG) biosynthesis. In terms of biological role, involved in the biosynthesis of osmoregulated periplasmic glucans (OPGs). The sequence is that of Glucans biosynthesis glucosyltransferase H from Enterobacter sp. (strain 638).